Reading from the N-terminus, the 165-residue chain is Large ribosomal subunit protein uL10 (165 aa).

This sequence belongs to the universal ribosomal protein uL10 family. Part of the ribosomal stalk of the 50S ribosomal subunit. The N-terminus interacts with L11 and the large rRNA to form the base of the stalk. The C-terminus forms an elongated spine to which L12 dimers bind in a sequential fashion forming a multimeric L10(L12)X complex.

In terms of biological role, forms part of the ribosomal stalk, playing a central role in the interaction of the ribosome with GTP-bound translation factors. This Enterobacter sp. (strain 638) protein is Large ribosomal subunit protein uL10.